The chain runs to 822 residues: Probable RING finger protein 207 homolog (822 aa).

The segment at cysteine 8–serine 42 adopts an RING-type zinc-finger fold. The B box-type 1; atypical zinc-finger motif lies at glutamate 68–serine 115. Positions 73, 76, 97, and 102 each coordinate Zn(2+). The B box-type 2; degenerate zinc finger occupies tyrosine 122–isoleucine 164. Coiled-coil stretches lie at residues asparagine 526–alanine 558 and aspartate 738–glutamate 769.

The chain is Probable RING finger protein 207 homolog from Caenorhabditis elegans.